We begin with the raw amino-acid sequence, 247 residues long: Probable transcriptional regulatory protein PMT_1423 (247 aa).

The protein belongs to the TACO1 family.

It localises to the cytoplasm. The polypeptide is Probable transcriptional regulatory protein PMT_1423 (Prochlorococcus marinus (strain MIT 9313)).